The primary structure comprises 157 residues: Small ribosomal subunit protein uS7 (157 aa).

It belongs to the universal ribosomal protein uS7 family. Part of the 30S ribosomal subunit. Contacts proteins S9 and S11.

In terms of biological role, one of the primary rRNA binding proteins, it binds directly to 16S rRNA where it nucleates assembly of the head domain of the 30S subunit. Is located at the subunit interface close to the decoding center, probably blocks exit of the E-site tRNA. The sequence is that of Small ribosomal subunit protein uS7 from Opitutus terrae (strain DSM 11246 / JCM 15787 / PB90-1).